The following is a 173-amino-acid chain: Translation initiation factor IF-3 (173 aa).

It belongs to the IF-3 family. Monomer.

The protein localises to the cytoplasm. Its function is as follows. IF-3 binds to the 30S ribosomal subunit and shifts the equilibrium between 70S ribosomes and their 50S and 30S subunits in favor of the free subunits, thus enhancing the availability of 30S subunits on which protein synthesis initiation begins. The polypeptide is Translation initiation factor IF-3 (Enterococcus faecalis (strain ATCC 700802 / V583)).